A 180-amino-acid polypeptide reads, in one-letter code: Large ribosomal subunit protein uL5 (180 aa).

This sequence belongs to the universal ribosomal protein uL5 family. Part of the 50S ribosomal subunit; part of the 5S rRNA/L5/L18/L25 subcomplex. Contacts the 5S rRNA and the P site tRNA. Forms a bridge to the 30S subunit in the 70S ribosome.

This is one of the proteins that bind and probably mediate the attachment of the 5S RNA into the large ribosomal subunit, where it forms part of the central protuberance. In the 70S ribosome it contacts protein S13 of the 30S subunit (bridge B1b), connecting the 2 subunits; this bridge is implicated in subunit movement. Contacts the P site tRNA; the 5S rRNA and some of its associated proteins might help stabilize positioning of ribosome-bound tRNAs. In Lactiplantibacillus plantarum (strain ATCC BAA-793 / NCIMB 8826 / WCFS1) (Lactobacillus plantarum), this protein is Large ribosomal subunit protein uL5.